Reading from the N-terminus, the 375-residue chain is 23S rRNA (uracil(747)-C(5))-methyltransferase RlmC (375 aa).

Residues C3, C11, C14, and C87 each coordinate [4Fe-4S] cluster. S-adenosyl-L-methionine is bound by residues Q212, F241, E262, and N307. C334 serves as the catalytic Nucleophile.

It belongs to the class I-like SAM-binding methyltransferase superfamily. RNA M5U methyltransferase family. RlmC subfamily.

The catalysed reaction is uridine(747) in 23S rRNA + S-adenosyl-L-methionine = 5-methyluridine(747) in 23S rRNA + S-adenosyl-L-homocysteine + H(+). Functionally, catalyzes the formation of 5-methyl-uridine at position 747 (m5U747) in 23S rRNA. The protein is 23S rRNA (uracil(747)-C(5))-methyltransferase RlmC of Xenorhabdus nematophila (strain ATCC 19061 / DSM 3370 / CCUG 14189 / LMG 1036 / NCIMB 9965 / AN6).